A 469-amino-acid polypeptide reads, in one-letter code: Zinc transporter SLC39A7 (469 aa).

Residues 10–30 (WVAVGLLTWATLGLLVAGLGG) form a helical membrane-spanning segment. Basic and acidic residues-rich tracts occupy residues 42-56 (FHGH…DFHH) and 66-114 (HTHE…EHSH). The segment at 42 to 121 (FHGHSHRHSH…HSHGGYGESG (80 aa)) is disordered. Residue His66 is modified to Pros-methylhistidine. The next 3 membrane-spanning stretches (helical) occupy residues 138-158 (ALGA…LIPV), 169-189 (LQIL…LHLI), and 214-234 (GPIL…LVVE). A compositionally biased stretch (basic residues) spans 242 to 263 (GGHGHSHGHGHAHSHTRGSHGH). The tract at residues 242 to 310 (GGHGHSHGHG…VRPQNAEEEK (69 aa)) is disordered. The span at 264–285 (GRQERSTKEKQSSEEEEKETRG) shows a compositional bias: basic and acidic residues. 2 positions are modified to phosphoserine; by CK2: Ser275 and Ser276. 2 helical membrane-spanning segments follow: residues 381–401 (MRLQ…ALLT) and 417–436 (GWVL…VSVL).

It belongs to the ZIP transporter (TC 2.A.5) family. KE4/Catsup subfamily. As to quaternary structure, homodimer. Rapidly phosphorylated by CK2 following Zn(2+) treatment. This phosphorylation is required for efficient cytosolic Zn(2+) release. Post-translationally, methylation at some His residue by METTL9 leads to reduced zinc-binding. As to expression, widely expressed.

It is found in the endoplasmic reticulum membrane. The protein resides in the golgi apparatus. It localises to the cis-Golgi network membrane. It carries out the reaction Zn(2+)(in) = Zn(2+)(out). Phosphorylation activates zinc transport activity. Functionally, transports Zn(2+) from the endoplasmic reticulum (ER)/Golgi apparatus to the cytosol, playing an essential role in the regulation of cytosolic zinc levels. Acts as a gatekeeper of zinc release from intracellular stores, requiring post-translational activation by phosphorylation, resulting in activation of multiple downstream pathways leading to cell growth and proliferation. Has an essential role in B cell development and is required for proper B cell receptor signaling. Plays an important role in maintaining intestinal epithelial homeostasis and skin dermis development by regulating ER function. Controls cell signaling pathways involved in glucose metabolism in skeletal muscle. Has a protective role against ER stress in different biological contexts. Mediates Zn(2+)-induced ferroptosis. In Homo sapiens (Human), this protein is Zinc transporter SLC39A7 (SLC39A7).